A 507-amino-acid polypeptide reads, in one-letter code: Maturase K (507 aa).

Belongs to the intron maturase 2 family. MatK subfamily.

It localises to the plastid. The protein localises to the chloroplast. Its function is as follows. Usually encoded in the trnK tRNA gene intron. Probably assists in splicing its own and other chloroplast group II introns. This Ranunculus macranthus (Large buttercup) protein is Maturase K.